A 47-amino-acid polypeptide reads, in one-letter code: Putative glycosylation-dependent cell adhesion molecule 1 (47 aa).

A signal peptide spans 1-18 (MKFFMVLLPASLASTSLA).

The protein belongs to the PP3/GlyCAM-1 family. In terms of tissue distribution, expressed in cells harvested from milk of lactating women. Not found in other tissues.

The polypeptide is Putative glycosylation-dependent cell adhesion molecule 1 (GLYCAM1) (Homo sapiens (Human)).